Consider the following 2670-residue polypeptide: Inositol 1,4,5-trisphosphate-gated calcium channel ITPR3 (2670 aa).

The Cytoplasmic portion of the chain corresponds to 1 to 2233; the sequence is MNEMSSFLHI…YVEGASTGVL (2233 aa). 5 consecutive MIR domains span residues 113–173, 174–224, 232–288, 295–372, and 378–434; these read GDVV…LRSN, GDNV…INLF, EEVL…VEVV, GGAG…LDPT, and DSFV…IVSV. 1D-myo-inositol 1,4,5-trisphosphate is bound by residues R266, L269, and R270. Residues R503, K507, R510, Y567, R568, and K569 each coordinate 1D-myo-inositol 1,4,5-trisphosphate. R743 is a Ca(2+) binding site. S916 and S934 each carry phosphoserine. Ca(2+) is bound by residues E1122 and E1125. The segment covering 1138–1153 has biased composition (basic and acidic residues); the sequence is EVEAGATKDKKERPSD. 2 disordered regions span residues 1138 to 1164 and 1807 to 1835; these read EVEA…HGEK and NMSD…SFSM. 3 positions are modified to phosphoserine: S1813, S1832, and S1834. Residues E1881 and E1945 each contribute to the Ca(2+) site. ATP contacts are provided by A1995, E2148, and K2151. Residues 2234-2254 traverse the membrane as a helical segment; that stretch reads GSPLISLLFWILICFSIAALF. The Extracellular segment spans residues 2255-2262; it reads TKRYSVRP. The chain crosses the membrane as a helical span at residues 2263–2283; it reads LIVALILRSIYYLGIGPTLNI. The Cytoplasmic segment spans residues 2284–2292; that stretch reads LGALNLTNK. The helical transmembrane segment at 2293 to 2310 threads the bilayer; the sequence is IVFVVSFVGNRGTFIRGY. At 2311-2324 the chain is on the extracellular side; it reads KAMVMDMEFLYHVG. The helical transmembrane segment at 2325-2345 threads the bilayer; the sequence is YILTSVLGLFAHELFYSILLF. Over 2346–2367 the chain is Cytoplasmic; it reads DLIYREETLFNVIKSVTRNGRS. A helical transmembrane segment spans residues 2368 to 2388; sequence ILLTALLALILVYLFSIVGFL. Residues 2389 to 2495 lie on the Extracellular side of the membrane; sequence FLKDDFILEV…ESLFPARVVY (107 aa). A disulfide bond links C2454 and C2460. Residues 2496 to 2516 form a helical membrane-spanning segment; the sequence is DLLFFFIVIIIVLNLIFGVII. At 2517–2670 the chain is on the cytoplasmic side; sequence DTFADLRSEK…FVDVQNCMSR (154 aa). Residues C2537 and F2538 each contribute to the ATP site. C2537 lines the Zn(2+) pocket. Zn(2+) contacts are provided by C2540 and H2557. ATP is bound by residues K2559, H2562, N2563, and M2564. Residue H2562 coordinates Zn(2+). T2580 is a binding site for Ca(2+). Phosphoserine occurs at positions 2608 and 2669.

Belongs to the InsP3 receptor family. Homodimer. Homotetramer. Interacts with TRPC1, TRPC3, TRPC4. Interacts with TRPV4. Interacts with SIGMAR1. Found in a complex with AKT1 and PML; this interaction modulates IP3R3-phosphorylation and in turn ITPR3-dependent calcium release. Interacts with IRAG2 (via coiled-coil domain). Interacts with CABP1. Interacts with TMBIM4/LFG4. Interacts with CEMIP. Interacts with TESPA1. Interacts with TMEM203. Interacts with BOK; regulates ITPR3 expression. Interacts with BCL2L10. Interacts with CHGA and CHGB. Post-translationally, phosphorylated by AKT1 on serine and/or threonine residues.

Its subcellular location is the endoplasmic reticulum membrane. It is found in the cytoplasmic vesicle. It localises to the secretory vesicle membrane. It carries out the reaction Ca(2+)(in) = Ca(2+)(out). Its activity is regulated as follows. Inositol 1,4,5-trisphosphate-gated calcium channel is regulated by cytosolic calcium in a biphasic manner. At low concentrations, cytosolic calcium binds at a high-affinity juxtamembrane domain (JD) calcium binding site, allowing ITPR3 to activate by escaping a low-energy resting state through an ensemble of preactivated states. At high cytosolic calcium concentrations, ITPR3 preferentially enters an inhibited state stabilized by calcium binding at a second, low-affinity cytoplasmic domain (CD) calcium binding site. In terms of biological role, inositol 1,4,5-trisphosphate-gated calcium channel that, upon 1D-myo-inositol 1,4,5-trisphosphate binding, transports calcium from the endoplasmic reticulum lumen to cytoplasm, thus releasing the intracellular calcium and therefore participates in cellular calcium ion homeostasis. 1D-myo-inositol 1,4,5-trisphosphate binds to the ligand-free channel without altering its global conformation, yielding the low-energy resting state, then progresses through resting-to preactivated transitions to the higher energy preactivated state, which increases affinity for calcium, promoting binding of the low basal cytosolic calcium at the juxtamembrane domain (JD) site, favoring the transition through the ensemble of high-energy intermediate states along the trajectory to the fully-open activated state. Upon opening, releases calcium in the cytosol where it can bind to the low-affinity cytoplasmic domain (CD) site and stabilizes the inhibited state to terminate calcium release. The sequence is that of Inositol 1,4,5-trisphosphate-gated calcium channel ITPR3 from Mus musculus (Mouse).